Consider the following 308-residue polypeptide: Aspartate carbamoyltransferase catalytic subunit (308 aa).

Carbamoyl phosphate contacts are provided by R49 and T50. K77 provides a ligand contact to L-aspartate. Residues R99, H127, and Q130 each contribute to the carbamoyl phosphate site. The L-aspartate site is built by R160 and R211. 2 residues coordinate carbamoyl phosphate: A252 and P253.

Belongs to the aspartate/ornithine carbamoyltransferase superfamily. ATCase family. In terms of assembly, heterododecamer (2C3:3R2) of six catalytic PyrB chains organized as two trimers (C3), and six regulatory PyrI chains organized as three dimers (R2).

The catalysed reaction is carbamoyl phosphate + L-aspartate = N-carbamoyl-L-aspartate + phosphate + H(+). It functions in the pathway pyrimidine metabolism; UMP biosynthesis via de novo pathway; (S)-dihydroorotate from bicarbonate: step 2/3. In terms of biological role, catalyzes the condensation of carbamoyl phosphate and aspartate to form carbamoyl aspartate and inorganic phosphate, the committed step in the de novo pyrimidine nucleotide biosynthesis pathway. This is Aspartate carbamoyltransferase catalytic subunit from Bacillus caldolyticus.